A 110-amino-acid chain; its full sequence is Late cornified envelope-like proline-rich protein 1 (110 aa).

The segment at 1–24 (MSSDDKNKPGEPKNEPKQCDPGCE) is disordered.

This sequence belongs to the cornifin (SPRR) family.

This Bos taurus (Bovine) protein is Late cornified envelope-like proline-rich protein 1 (LELP1).